A 184-amino-acid chain; its full sequence is Guanylate kinase (184 aa).

One can recognise a Guanylate kinase-like domain in the interval 5 to 183 (NGLIVITGPS…ALLEIKKLIK (179 aa)). 12-19 (GPSGVGKG) is a binding site for ATP.

The protein belongs to the guanylate kinase family.

Its subcellular location is the cytoplasm. The catalysed reaction is GMP + ATP = GDP + ADP. In terms of biological role, essential for recycling GMP and indirectly, cGMP. The protein is Guanylate kinase of Prochlorococcus marinus (strain SARG / CCMP1375 / SS120).